A 99-amino-acid polypeptide reads, in one-letter code: Ferredoxin (99 aa).

Positions 4–96 (YKIHLLCEEE…DCTISTHVEQ (93 aa)) constitute a 2Fe-2S ferredoxin-type domain. Residues C42, C47, C50, and C80 each contribute to the [2Fe-2S] cluster site.

Belongs to the 2Fe2S plant-type ferredoxin family. As to quaternary structure, forms a complex with heterodimeric ferredoxin-thioredoxin reductase (FTR) and thioredoxin. [2Fe-2S] cluster serves as cofactor.

It localises to the plastid. Its subcellular location is the chloroplast. Functionally, ferredoxins are iron-sulfur proteins that transfer electrons in a wide variety of metabolic reactions. This Pyropia yezoensis (Susabi-nori) protein is Ferredoxin (petF).